The chain runs to 201 residues: MLELVAATLGGYLLGSVPFGLVLTRLAGLGDIRQIGSGNIGATNVLRTGRKGLALATLLLDGGKGAIAVGLVWVLLGREMVPVAGFAAVLGHNFPVWLGFKGGKGVATTIGTLLAAAWPVGLACIGTWLVSAAIFRISSLSALIALAASPGFALYFAGPQYALMAAGLAVMGFYRHKANIIRLIRGEEPRIGGKKKTESEG.

Transmembrane regions (helical) follow at residues 4–24, 55–75, 80–100, 110–130, and 152–174; these read LVAA…LVLT, LATL…VWVL, MVPV…WLGF, IGTL…TWLV, and FALY…MGFY.

Belongs to the PlsY family. As to quaternary structure, probably interacts with PlsX.

It localises to the cell inner membrane. The catalysed reaction is an acyl phosphate + sn-glycerol 3-phosphate = a 1-acyl-sn-glycero-3-phosphate + phosphate. It participates in lipid metabolism; phospholipid metabolism. Functionally, catalyzes the transfer of an acyl group from acyl-phosphate (acyl-PO(4)) to glycerol-3-phosphate (G3P) to form lysophosphatidic acid (LPA). This enzyme utilizes acyl-phosphate as fatty acyl donor, but not acyl-CoA or acyl-ACP. The sequence is that of Glycerol-3-phosphate acyltransferase from Paramagnetospirillum magneticum (strain ATCC 700264 / AMB-1) (Magnetospirillum magneticum).